The chain runs to 121 residues: UPF0102 protein BF0706 (121 aa).

This sequence belongs to the UPF0102 family.

This Bacteroides fragilis (strain YCH46) protein is UPF0102 protein BF0706.